Consider the following 465-residue polypeptide: Ribosomal oxygenase 2 (465 aa).

A JmjC domain is found at Gln-139 to Thr-271. 3 residues coordinate Fe cation: His-179, Asp-181, and His-240. Residue Ser-309 is modified to Phosphoserine.

It belongs to the ROX family. MINA53 subfamily. Fe(2+) is required as a cofactor.

The protein resides in the nucleus. The protein localises to the nucleolus. The catalysed reaction is L-histidyl-[ribosomal protein uL15] + 2-oxoglutarate + O2 = (3S)-3-hydroxy-L-histidyl-[ribosomal protein uL15] + succinate + CO2. It catalyses the reaction L-histidyl-[protein] + 2-oxoglutarate + O2 = (3S)-3-hydroxy-L-histidyl-[protein] + succinate + CO2. In terms of biological role, oxygenase that can act as both a histone lysine demethylase and a ribosomal histidine hydroxylase. Is involved in the demethylation of trimethylated 'Lys-9' on histone H3 (H3K9me3), leading to an increase in ribosomal RNA expression. Also catalyzes the hydroxylation of 60S ribosomal protein L27a on 'His-39'. May play an important role in cell growth and survival. May be involved in ribosome biogenesis, most likely during the assembly process of pre-ribosomal particles. This Pongo abelii (Sumatran orangutan) protein is Ribosomal oxygenase 2 (RIOX2).